Reading from the N-terminus, the 281-residue chain is Aspartate/glutamate leucyltransferase (281 aa).

It belongs to the R-transferase family. Bpt subfamily.

The protein localises to the cytoplasm. The enzyme catalyses N-terminal L-glutamyl-[protein] + L-leucyl-tRNA(Leu) = N-terminal L-leucyl-L-glutamyl-[protein] + tRNA(Leu) + H(+). It carries out the reaction N-terminal L-aspartyl-[protein] + L-leucyl-tRNA(Leu) = N-terminal L-leucyl-L-aspartyl-[protein] + tRNA(Leu) + H(+). Its function is as follows. Functions in the N-end rule pathway of protein degradation where it conjugates Leu from its aminoacyl-tRNA to the N-termini of proteins containing an N-terminal aspartate or glutamate. The protein is Aspartate/glutamate leucyltransferase of Paracoccus denitrificans (strain Pd 1222).